Consider the following 356-residue polypeptide: Tyrosine recombinase XerS (356 aa).

Positions 16–121 (IMPWYVLDYY…ALSSLYKYLT (106 aa)) constitute a Core-binding (CB) domain. The 186-residue stretch at 169-354 (AFLDYVDKEY…VNDEQKNALD (186 aa)) folds into the Tyr recombinase domain. Catalysis depends on residues arginine 210, lysine 234, histidine 306, arginine 309, and histidine 332. The active-site O-(3'-phospho-DNA)-tyrosine intermediate is tyrosine 341.

Belongs to the 'phage' integrase family. XerS subfamily.

The protein resides in the cytoplasm. FtsK is required for recombination. In terms of biological role, site-specific tyrosine recombinase, which acts by catalyzing the cutting and rejoining of the recombining DNA molecules. Essential to convert dimers of the bacterial chromosome into monomers to permit their segregation at cell division. This Streptococcus pyogenes serotype M49 (strain NZ131) protein is Tyrosine recombinase XerS.